The following is a 752-amino-acid chain: Photosystem I P700 chlorophyll a apoprotein A1 (752 aa).

Transmembrane regions (helical) follow at residues Ile-73 to Ala-96, Leu-159 to His-182, Met-198 to Leu-222, Ile-294 to Tyr-312, Trp-349 to Tyr-372, Leu-388 to Val-414, Ala-436 to His-458, and Phe-533 to Leu-551. Cys-575 and Cys-584 together coordinate [4Fe-4S] cluster. 2 helical membrane-spanning segments follow: residues His-591–Trp-612 and Ser-666–Phe-688. His-677 contacts chlorophyll a'. 2 residues coordinate chlorophyll a: Met-685 and Tyr-693. Trp-694 contacts phylloquinone. The chain crosses the membrane as a helical span at residues Ala-726 to Ala-746.

This sequence belongs to the PsaA/PsaB family. The PsaA/B heterodimer binds the P700 chlorophyll special pair and subsequent electron acceptors. PSI consists of a core antenna complex that captures photons, and an electron transfer chain that converts photonic excitation into a charge separation. The eukaryotic PSI reaction center is composed of at least 11 subunits. It depends on P700 is a chlorophyll a/chlorophyll a' dimer, A0 is one or more chlorophyll a, A1 is one or both phylloquinones and FX is a shared 4Fe-4S iron-sulfur center. as a cofactor.

The protein localises to the plastid. It localises to the chloroplast thylakoid membrane. It catalyses the reaction reduced [plastocyanin] + hnu + oxidized [2Fe-2S]-[ferredoxin] = oxidized [plastocyanin] + reduced [2Fe-2S]-[ferredoxin]. In terms of biological role, psaA and PsaB bind P700, the primary electron donor of photosystem I (PSI), as well as the electron acceptors A0, A1 and FX. PSI is a plastocyanin/cytochrome c6-ferredoxin oxidoreductase, converting photonic excitation into a charge separation, which transfers an electron from the donor P700 chlorophyll pair to the spectroscopically characterized acceptors A0, A1, FX, FA and FB in turn. Oxidized P700 is reduced on the lumenal side of the thylakoid membrane by plastocyanin or cytochrome c6. The sequence is that of Photosystem I P700 chlorophyll a apoprotein A1 from Thalassiosira pseudonana (Marine diatom).